The chain runs to 95 residues: Aspartyl/glutamyl-tRNA(Asn/Gln) amidotransferase subunit C (95 aa).

Belongs to the GatC family. As to quaternary structure, heterotrimer of A, B and C subunits.

The catalysed reaction is L-glutamyl-tRNA(Gln) + L-glutamine + ATP + H2O = L-glutaminyl-tRNA(Gln) + L-glutamate + ADP + phosphate + H(+). It carries out the reaction L-aspartyl-tRNA(Asn) + L-glutamine + ATP + H2O = L-asparaginyl-tRNA(Asn) + L-glutamate + ADP + phosphate + 2 H(+). Its function is as follows. Allows the formation of correctly charged Asn-tRNA(Asn) or Gln-tRNA(Gln) through the transamidation of misacylated Asp-tRNA(Asn) or Glu-tRNA(Gln) in organisms which lack either or both of asparaginyl-tRNA or glutaminyl-tRNA synthetases. The reaction takes place in the presence of glutamine and ATP through an activated phospho-Asp-tRNA(Asn) or phospho-Glu-tRNA(Gln). This chain is Aspartyl/glutamyl-tRNA(Asn/Gln) amidotransferase subunit C, found in Rhizobium etli (strain ATCC 51251 / DSM 11541 / JCM 21823 / NBRC 15573 / CFN 42).